The sequence spans 404 residues: tRNA N6-adenosine threonylcarbamoyltransferase, mitochondrial (404 aa).

The N-terminal 27 residues, 1 to 27, are a transit peptide targeting the mitochondrion; the sequence is MFQSCLPGALRSWSRGVFSTSTRPRLV. The a divalent metal cation site is built by histidine 135 and histidine 139. Substrate contacts are provided by residues 157–161, aspartate 190, glycine 210, glutamate 214, 317–318, and threonine 345; these read LVSGG and SN. An a divalent metal cation-binding site is contributed by aspartate 346.

This sequence belongs to the KAE1 / TsaD family. As to quaternary structure, monomer. A divalent metal cation serves as cofactor.

It localises to the mitochondrion. The catalysed reaction is L-threonylcarbamoyladenylate + adenosine(37) in tRNA = N(6)-L-threonylcarbamoyladenosine(37) in tRNA + AMP + H(+). Its function is as follows. Required for the formation of a threonylcarbamoyl group on adenosine at position 37 (t(6)A37) in mitochondrial tRNAs that read codons beginning with adenine. Probably involved in the transfer of the threonylcarbamoyl moiety of threonylcarbamoyl-AMP (TC-AMP) to the N6 group of A37. Involved in mitochondrial genome maintenance. This chain is tRNA N6-adenosine threonylcarbamoyltransferase, mitochondrial, found in Danio rerio (Zebrafish).